Here is a 600-residue protein sequence, read N- to C-terminus: Alpha pinene synthase, chloroplastic (600 aa).

The disordered stretch occupies residues 1 to 27; sequence MSSISMHAGPLNISAANNHHPSWDRRV. A chloroplast-targeting transit peptide spans 1 to 31; the sequence is MSSISMHAGPLNISAANNHHPSWDRRVSKPR. Mg(2+)-binding residues include Asp354, Asp358, Asp498, and Glu506. Residues 354 to 358 carry the DDXXD motif motif; it reads DDVYD.

This sequence belongs to the terpene synthase family. Tpsa subfamily. Requires Mg(2+) as cofactor. Mn(2+) serves as cofactor. In terms of tissue distribution, expressed at low levels in leaves.

It is found in the plastid. The protein localises to the chloroplast. The enzyme catalyses (2E)-geranyl diphosphate = alpha-pinene + diphosphate. Its pathway is secondary metabolite biosynthesis; terpenoid biosynthesis. In terms of biological role, monoterpene synthase involved in the biosynthesis of volatile compounds widely used in aromatherapy and folk medicine, and present in culinary herbs. Mediates the conversion of (2E)-geranyl diphosphate (GPP) into alpha-pinene and, as minor compounds, into alpha-phellandrene, limonene and alpha-terpinolene. This is Alpha pinene synthase, chloroplastic from Lavandula viridis (Green lavender).